Here is a 333-residue protein sequence, read N- to C-terminus: 3-isopropylmalate/3-methylmalate dehydrogenase (333 aa).

Residues arginine 81, arginine 91, arginine 112, and aspartate 203 each contribute to the substrate site. The Mg(2+) site is built by aspartate 203, aspartate 227, and aspartate 231. 260–272 (GSAPDIAGKKIAN) is a binding site for NAD(+).

The protein belongs to the isocitrate and isopropylmalate dehydrogenases family. Homotetramer. Requires Mg(2+) as cofactor. It depends on Mn(2+) as a cofactor.

The protein localises to the cytoplasm. The catalysed reaction is (2R,3S)-3-isopropylmalate + NAD(+) = 4-methyl-2-oxopentanoate + CO2 + NADH. It catalyses the reaction (2R,3S)-3-methylmalate + NAD(+) = 2-oxobutanoate + CO2 + NADH. The enzyme catalyses (R)-malate + NAD(+) = pyruvate + CO2 + NADH. The protein operates within amino-acid biosynthesis; L-leucine biosynthesis; L-leucine from 3-methyl-2-oxobutanoate: step 3/4. Its pathway is amino-acid biosynthesis; L-isoleucine biosynthesis; 2-oxobutanoate from pyruvate: step 3/3. Functionally, catalyzes the oxidation of 3-carboxy-2-hydroxy-4-methylpentanoate (3-isopropylmalate) to 3-carboxy-4-methyl-2-oxopentanoate, which decarboxylates to 4-methyl-2-oxopentanoate (2-oxoisocaproate). Also catalyzes the oxidative decarboxylation of 3-methylmalate to 2-oxobutyrate, and that of D-malate to pyruvate. Cannot use NADP(+) instead of NAD(+). Cannot catalyze the oxidation of L-malate, L-tartrate, D-tartrate, DL-isocitrate, or DL-lactate. The protein is 3-isopropylmalate/3-methylmalate dehydrogenase (leuB) of Methanocaldococcus jannaschii (strain ATCC 43067 / DSM 2661 / JAL-1 / JCM 10045 / NBRC 100440) (Methanococcus jannaschii).